Here is a 2646-residue protein sequence, read N- to C-terminus: Probable inactive serine/threonine-protein kinase roco10 (2646 aa).

Disordered stretches follow at residues 28 to 122, 138 to 168, 205 to 248, 281 to 457, 477 to 516, 605 to 656, and 882 to 907; these read LNYS…LSGG, NIPIPPVPTSPTSTPPNLQTNNNNKQDKDKD, PLFI…VSPS, QQQR…VKQA, MSKLVSQSKEQYKTPSSPYQQSTSSSISSGSGTISGHTSP, TSPN…PHQY, and QSSSSSSSSSISNSSSASSSSSSTPS. Residues 46–56 are compositionally biased toward polar residues; sequence PQQNLLENDTL. 3 stretches are compositionally biased toward low complexity: residues 78 to 115, 147 to 161, and 215 to 228; these read IITTTTTTTTTTAMSPVATTTTSSPTISASPTYITSPS, SPTSTPPNLQTNNNN, and SRNNNGKRNSGGNK. Polar residues predominate over residues 235–248; that stretch reads KISSTSAAGDVSPS. 2 stretches are compositionally biased toward low complexity: residues 285–297 and 325–334; these read NGNNNNNNNNNNN and NNNNNNNNNN. Polar residues predominate over residues 335–345; it reads KQPQHPMNGNH. Over residues 346 to 394 the composition is skewed to low complexity; that stretch reads SPSNGTSGSLSMSGSGIDNGGNNNNNSNTHGSSSNQSSGVTSPIIQSTS. 2 stretches are compositionally biased toward polar residues: residues 402 to 416 and 428 to 443; these read GLNSDSQMPLSSSPT and TSASAVSSQNRSPLMN. 5 stretches are compositionally biased toward low complexity: residues 444-454, 491-516, 605-627, 634-651, and 883-907; these read STGVSSSSSGV, PSSPYQQSTSSSISSGSGTISGHTSP, TSPNLSSSLSSSSSSGSSGNSSP, QQQQQPQPTTTTTTNTNT, and SSSSSSSSSISNSSSASSSSSSTPS. In terms of domain architecture, Rho-GAP spans 585-807; sequence SSISPISTAA…MFIQQADILF (223 aa). LRR repeat units lie at residues 968-987, 989-1011, 1012-1033, 1040-1061, 1062-1083, 1085-1108, 1109-1131, 1132-1154, 1155-1176, 1178-1199, 1201-1222, 1224-1247, 1248-1270, 1271-1298, and 1303-1327; these read QKLDMFSLELESLPNEIKQL, DLQELNLNRNKFKLLPGDLARLT, SLRTICIEENNLTEISSEMADF, NLENVTLSSNRLVVLPPLYTWL, KLKTLNISNNYLTKLPIDIFQI, TLEVLRVSNNDLDDNGIPKICTST, KLRSLDLRKNHLTSIPEGIINLV, ELQVLTLADNQISHLTSDIQKLT, SLTELNLNGNQIQSLPPQLLLL, NLKKLYLDNNQLQSISSAIHRM, SLIELRLTNNNISRLPPGIVAL, KLNSLELTGNKPLKDNIPEKYIQK, GKEGIFSFFSETMRTNVPCYRTR, IIMLGDKSTGKSNLIKCLKKLPKSSFSS, and LPSLNNLNSNNSNNSGNSKTNILDI. A Roc domain is found at 1262 to 1474; the sequence is TNVPCYRTRI…RDIKQMIAKN (213 aa). Disordered stretches follow at residues 1293–1317, 1651–1670, and 1957–2026; these read KSSFSSSSSNLPSLNNLNSNNSNNS, NNNNSNGNNVGRGRSGSRSM, and NNSS…KEKE. Low complexity predominate over residues 1651–1669; sequence NNNNSNGNNVGRGRSGSRS. Polar residues predominate over residues 1966–1975; sequence PIASSRSNPK. The segment covering 1983–1996 has biased composition (low complexity); sequence NLIQSNNNDNNNSL. Positions 1997 to 2026 are enriched in basic and acidic residues; that stretch reads SKKDLKELAKQNKEKEKEKEKDKDKEKEKE. The 294-residue stretch at 2049–2342 folds into the Protein kinase domain; it reads FSICHFIKEI…PSKIISQLYT (294 aa). Residues 2055–2063 and K2094 each bind ATP; that span reads IKEIDYREI. In terms of domain architecture, RGS spans 2412–2536; the sequence is MVVLNNKQST…FTVPTTNKNG (125 aa).

Belongs to the protein kinase superfamily. TKL Ser/Thr protein kinase family. ROCO subfamily.

In Dictyostelium discoideum (Social amoeba), this protein is Probable inactive serine/threonine-protein kinase roco10 (roco10).